Reading from the N-terminus, the 284-residue chain is Tropomyosin (284 aa).

A coiled-coil region spans residues 1 to 284; that stretch reads MDGIKKKMIA…DQTFAELTGY (284 aa). The interval 111-131 is disordered; it reads TKLEEASKTAEESERGRKDLE.

It belongs to the tropomyosin family. Homodimer.

In terms of biological role, tropomyosin, in association with the troponin complex, plays a central role in the calcium dependent regulation of muscle contraction. The protein is Tropomyosin of Schistosoma haematobium (Blood fluke).